A 445-amino-acid polypeptide reads, in one-letter code: Gamma-glutamyl phosphate reductase (445 aa).

This sequence belongs to the gamma-glutamyl phosphate reductase family.

Its subcellular location is the cytoplasm. It catalyses the reaction L-glutamate 5-semialdehyde + phosphate + NADP(+) = L-glutamyl 5-phosphate + NADPH + H(+). It participates in amino-acid biosynthesis; L-proline biosynthesis; L-glutamate 5-semialdehyde from L-glutamate: step 2/2. Functionally, catalyzes the NADPH-dependent reduction of L-glutamate 5-phosphate into L-glutamate 5-semialdehyde and phosphate. The product spontaneously undergoes cyclization to form 1-pyrroline-5-carboxylate. This chain is Gamma-glutamyl phosphate reductase, found in Persephonella marina (strain DSM 14350 / EX-H1).